The primary structure comprises 695 residues: MEKDLTRYRNIGIFAHVDAGKTTTTERILKLTGRIHKLGEVHEGESTMDFMEQEAERGITIQSAATSCFWKDHQLNVIDTPGHVDFTIEVYRSLKVLDGGIGVFCGSGGVEPQSETNWRYANDSKVARLIYINKLDRTGADFYRVVKQVETVLGAKPLVMTLPIGTENDFVGVVDILTEKAYIWDDSGDPEKYEITDIPADMVDDVATYREMLIETAVEQDDDLMEKYLEGEEISIDDIKRCIRTGTRKLDFFPTYGGSSFKNKGVQLVLDAVVDYLPNPKEVPPQPEVDLEGEETGNYAIVDPEAPLRALAFKIMDDRFGALTFTRIYSGTLSKGDTILNTATGKTERIGRLVEMHADSREEIESAQAGDIVAIVGMKNVQTGHTLCDPKNPATLEPMVFPDPVISIAIKPKKKGMDEKLGMALSKMVQEDPSFQVETDEESGETIIKGMGELHLDIKMDILKRTHGVEVEMGKPQVAYRESITQQVSDTYVHKKQSGGSGQYAKIDYIVEPGEPGSGFQFESKVTGGNVPREYWPAVQKGFDQSVVKGVLAGYPVVDLKVTLTDGGFHPVDSSAIAFEIAAKAGYRQSLPKAKPQILEPIMAVDVFTPEDHMGDVIGDLNRRRGMIKSQETGPMGVRVKADVPLSEMFGYIGDLRTMTSGRGQFSMVFDHYAPCPTNVAEEVIKEAKERQAAA.

The region spanning 6–281 is the tr-type G domain; that stretch reads TRYRNIGIFA…AVVDYLPNPK (276 aa). Residues 15-22, 79-83, and 133-136 contribute to the GTP site; these read AHVDAGKT, DTPGH, and NKLD.

The protein belongs to the TRAFAC class translation factor GTPase superfamily. Classic translation factor GTPase family. EF-G/EF-2 subfamily.

The protein resides in the cytoplasm. In terms of biological role, catalyzes the GTP-dependent ribosomal translocation step during translation elongation. During this step, the ribosome changes from the pre-translocational (PRE) to the post-translocational (POST) state as the newly formed A-site-bound peptidyl-tRNA and P-site-bound deacylated tRNA move to the P and E sites, respectively. Catalyzes the coordinated movement of the two tRNA molecules, the mRNA and conformational changes in the ribosome. The protein is Elongation factor G 1 (fusA) of Synechocystis sp. (strain ATCC 27184 / PCC 6803 / Kazusa).